Consider the following 212-residue polypeptide: Cyclin-P4-1 (212 aa).

Belongs to the cyclin family. Cyclin U/P subfamily.

The sequence is that of Cyclin-P4-1 (CYCP4-1) from Oryza sativa subsp. japonica (Rice).